The sequence spans 171 residues: Adenine phosphoribosyltransferase (171 aa).

This sequence belongs to the purine/pyrimidine phosphoribosyltransferase family. In terms of assembly, homodimer.

The protein localises to the cytoplasm. The enzyme catalyses AMP + diphosphate = 5-phospho-alpha-D-ribose 1-diphosphate + adenine. Its pathway is purine metabolism; AMP biosynthesis via salvage pathway; AMP from adenine: step 1/1. Its function is as follows. Catalyzes a salvage reaction resulting in the formation of AMP, that is energically less costly than de novo synthesis. The protein is Adenine phosphoribosyltransferase of Methylococcus capsulatus (strain ATCC 33009 / NCIMB 11132 / Bath).